The sequence spans 208 residues: Phosphoheptose isomerase (208 aa).

The region spanning 38 to 200 (MALTLARGRK…LFENVLALQP (163 aa)) is the SIS domain. Residue 53 to 55 (NGG) participates in substrate binding. Residues H62 and E66 each coordinate Zn(2+). Residues E66, 95–96 (ND), 121–123 (STS), S126, and Q173 each bind substrate. Positions 173 and 181 each coordinate Zn(2+).

Belongs to the SIS family. GmhA subfamily. Homotetramer. The cofactor is Zn(2+).

The protein resides in the cytoplasm. The enzyme catalyses 2 D-sedoheptulose 7-phosphate = D-glycero-alpha-D-manno-heptose 7-phosphate + D-glycero-beta-D-manno-heptose 7-phosphate. It participates in carbohydrate biosynthesis; D-glycero-D-manno-heptose 7-phosphate biosynthesis; D-glycero-alpha-D-manno-heptose 7-phosphate and D-glycero-beta-D-manno-heptose 7-phosphate from sedoheptulose 7-phosphate: step 1/1. In terms of biological role, catalyzes the isomerization of sedoheptulose 7-phosphate in D-glycero-D-manno-heptose 7-phosphate. The protein is Phosphoheptose isomerase of Nitratidesulfovibrio vulgaris (strain DSM 19637 / Miyazaki F) (Desulfovibrio vulgaris).